A 300-amino-acid chain; its full sequence is Phosphatidylserine decarboxylase proenzyme (300 aa).

Residues aspartate 113, histidine 169, and serine 256 each act as charge relay system; for autoendoproteolytic cleavage activity in the active site. The active-site Schiff-base intermediate with substrate; via pyruvic acid; for decarboxylase activity is serine 256. Serine 256 carries the pyruvic acid (Ser); by autocatalysis modification.

This sequence belongs to the phosphatidylserine decarboxylase family. PSD-B subfamily. Prokaryotic type II sub-subfamily. Heterodimer of a large membrane-associated beta subunit and a small pyruvoyl-containing alpha subunit. Requires pyruvate as cofactor. Is synthesized initially as an inactive proenzyme. Formation of the active enzyme involves a self-maturation process in which the active site pyruvoyl group is generated from an internal serine residue via an autocatalytic post-translational modification. Two non-identical subunits are generated from the proenzyme in this reaction, and the pyruvate is formed at the N-terminus of the alpha chain, which is derived from the carboxyl end of the proenzyme. The autoendoproteolytic cleavage occurs by a canonical serine protease mechanism, in which the side chain hydroxyl group of the serine supplies its oxygen atom to form the C-terminus of the beta chain, while the remainder of the serine residue undergoes an oxidative deamination to produce ammonia and the pyruvoyl prosthetic group on the alpha chain. During this reaction, the Ser that is part of the protease active site of the proenzyme becomes the pyruvoyl prosthetic group, which constitutes an essential element of the active site of the mature decarboxylase.

Its subcellular location is the cell membrane. The catalysed reaction is a 1,2-diacyl-sn-glycero-3-phospho-L-serine + H(+) = a 1,2-diacyl-sn-glycero-3-phosphoethanolamine + CO2. It functions in the pathway phospholipid metabolism; phosphatidylethanolamine biosynthesis; phosphatidylethanolamine from CDP-diacylglycerol: step 2/2. In terms of biological role, catalyzes the formation of phosphatidylethanolamine (PtdEtn) from phosphatidylserine (PtdSer). In Ruminiclostridium cellulolyticum (strain ATCC 35319 / DSM 5812 / JCM 6584 / H10) (Clostridium cellulolyticum), this protein is Phosphatidylserine decarboxylase proenzyme.